We begin with the raw amino-acid sequence, 71 residues long: ATP synthase subunit c (71 aa).

2 helical membrane passes run 5-25 (VLAAGIAVLSGIGAGVGIGIA) and 46-66 (FFILGAALCETTAIYGLVMAF).

Belongs to the ATPase C chain family. F-type ATPases have 2 components, F(1) - the catalytic core - and F(0) - the membrane proton channel. F(1) has five subunits: alpha(3), beta(3), gamma(1), delta(1), epsilon(1). F(0) has three main subunits: a(1), b(2) and c(10-14). The alpha and beta chains form an alternating ring which encloses part of the gamma chain. F(1) is attached to F(0) by a central stalk formed by the gamma and epsilon chains, while a peripheral stalk is formed by the delta and b chains.

It is found in the cell membrane. Functionally, f(1)F(0) ATP synthase produces ATP from ADP in the presence of a proton or sodium gradient. F-type ATPases consist of two structural domains, F(1) containing the extramembraneous catalytic core and F(0) containing the membrane proton channel, linked together by a central stalk and a peripheral stalk. During catalysis, ATP synthesis in the catalytic domain of F(1) is coupled via a rotary mechanism of the central stalk subunits to proton translocation. Key component of the F(0) channel; it plays a direct role in translocation across the membrane. A homomeric c-ring of between 10-14 subunits forms the central stalk rotor element with the F(1) delta and epsilon subunits. The polypeptide is ATP synthase subunit c (Clostridium beijerinckii (strain ATCC 51743 / NCIMB 8052) (Clostridium acetobutylicum)).